Here is a 505-residue protein sequence, read N- to C-terminus: Glutamate--tRNA ligase (505 aa).

Residues 16-26 (PSPTGFPHVGT) carry the 'HIGH' region motif. The 'KMSKS' region motif lies at 257–261 (KLSKR). Residue Lys-260 participates in ATP binding.

The protein belongs to the class-I aminoacyl-tRNA synthetase family. Glutamate--tRNA ligase type 1 subfamily. In terms of assembly, monomer.

It is found in the cytoplasm. It carries out the reaction tRNA(Glu) + L-glutamate + ATP = L-glutamyl-tRNA(Glu) + AMP + diphosphate. Functionally, catalyzes the attachment of glutamate to tRNA(Glu) in a two-step reaction: glutamate is first activated by ATP to form Glu-AMP and then transferred to the acceptor end of tRNA(Glu). The protein is Glutamate--tRNA ligase of Psychrobacter sp. (strain PRwf-1).